A 380-amino-acid polypeptide reads, in one-letter code: Cytochrome b (380 aa).

A run of 4 helical transmembrane segments spans residues 34–54 (FGSL…LLAA), 78–99 (WLIR…YMHV), 114–134 (WNTG…GYVL), and 179–199 (FFTL…IHLT). 2 residues coordinate heme b: histidine 84 and histidine 98. Positions 183 and 197 each coordinate heme b. A ubiquinone is bound at residue histidine 202. 4 consecutive transmembrane segments (helical) span residues 227–247 (LKDI…ALFS), 289–309 (LGGV…PLLH), 321–341 (LSQL…WVGS), and 348–368 (FMII…ILFP).

The protein belongs to the cytochrome b family. As to quaternary structure, the cytochrome bc1 complex contains 11 subunits: 3 respiratory subunits (MT-CYB, CYC1 and UQCRFS1), 2 core proteins (UQCRC1 and UQCRC2) and 6 low-molecular weight proteins (UQCRH/QCR6, UQCRB/QCR7, UQCRQ/QCR8, UQCR10/QCR9, UQCR11/QCR10 and a cleavage product of UQCRFS1). This cytochrome bc1 complex then forms a dimer. Heme b is required as a cofactor.

Its subcellular location is the mitochondrion inner membrane. Component of the ubiquinol-cytochrome c reductase complex (complex III or cytochrome b-c1 complex) that is part of the mitochondrial respiratory chain. The b-c1 complex mediates electron transfer from ubiquinol to cytochrome c. Contributes to the generation of a proton gradient across the mitochondrial membrane that is then used for ATP synthesis. This is Cytochrome b (MT-CYB) from Balearica pavonina (Black crowned-crane).